We begin with the raw amino-acid sequence, 230 residues long: Uracil-DNA glycosylase (230 aa).

Catalysis depends on aspartate 70, which acts as the Proton acceptor.

This sequence belongs to the uracil-DNA glycosylase (UDG) superfamily. UNG family.

The protein localises to the cytoplasm. The enzyme catalyses Hydrolyzes single-stranded DNA or mismatched double-stranded DNA and polynucleotides, releasing free uracil.. Functionally, excises uracil residues from the DNA which can arise as a result of misincorporation of dUMP residues by DNA polymerase or due to deamination of cytosine. In Pseudomonas syringae pv. syringae (strain B728a), this protein is Uracil-DNA glycosylase.